The sequence spans 340 residues: Ferrochelatase (340 aa).

Fe cation contacts are provided by His189 and Glu292.

It belongs to the ferrochelatase family.

It is found in the cytoplasm. The catalysed reaction is heme b + 2 H(+) = protoporphyrin IX + Fe(2+). The protein operates within porphyrin-containing compound metabolism; protoheme biosynthesis; protoheme from protoporphyrin-IX: step 1/1. Catalyzes the ferrous insertion into protoporphyrin IX. This Pseudomonas fluorescens biotype C protein is Ferrochelatase.